The chain runs to 151 residues: Pollen allergen Sal k 5.0101 (151 aa).

Intrachain disulfides connect Cys-17-Cys-88, Cys-20-Cys-132, and Cys-41-Cys-76. Asn-43 is a glycosylation site (N-linked (GlcNAc...) asparagine).

The protein belongs to the Ole e I family. In terms of processing, N-glycosylated. Contains fucose monosaccharides in the glycan structure. Expressed in pollen (at protein level).

It localises to the secreted. The protein is Pollen allergen Sal k 5.0101 of Kali turgidum (Prickly saltwort).